The primary structure comprises 172 residues: Shikimate kinase (172 aa).

14–19 (GAGKST) provides a ligand contact to ATP. S18 serves as a coordination point for Mg(2+). Substrate is bound by residues D36, R60, and G82. R120 contributes to the ATP binding site. R140 is a binding site for substrate. Q157 lines the ATP pocket.

The protein belongs to the shikimate kinase family. In terms of assembly, monomer. Mg(2+) serves as cofactor.

The protein resides in the cytoplasm. The enzyme catalyses shikimate + ATP = 3-phosphoshikimate + ADP + H(+). It participates in metabolic intermediate biosynthesis; chorismate biosynthesis; chorismate from D-erythrose 4-phosphate and phosphoenolpyruvate: step 5/7. In terms of biological role, catalyzes the specific phosphorylation of the 3-hydroxyl group of shikimic acid using ATP as a cosubstrate. The protein is Shikimate kinase of Colwellia psychrerythraea (strain 34H / ATCC BAA-681) (Vibrio psychroerythus).